The following is a 269-amino-acid chain: Glutamate 5-kinase 2 (269 aa).

Position 16 (Lys-16) interacts with ATP. 3 residues coordinate substrate: Ser-57, Asp-144, and Asn-156. Residue 218 to 224 (SGGMISK) coordinates ATP.

This sequence belongs to the glutamate 5-kinase family.

It localises to the cytoplasm. It carries out the reaction L-glutamate + ATP = L-glutamyl 5-phosphate + ADP. Its pathway is amino-acid biosynthesis; L-proline biosynthesis; L-glutamate 5-semialdehyde from L-glutamate: step 1/2. Functionally, catalyzes the transfer of a phosphate group to glutamate to form L-glutamate 5-phosphate. The sequence is that of Glutamate 5-kinase 2 from Rhizobium meliloti (strain 1021) (Ensifer meliloti).